The sequence spans 682 residues: ATP-dependent DNA helicase RecG (682 aa).

The wedge domain stretch occupies residues 46–139; it reads ELRDLEEVKH…LKNGPHQEDK (94 aa). Residues 271-432 form the Helicase ATP-binding domain; sequence DMSSPYRMNR…VFGEMDVSVI (162 aa). 284–291 lines the ATP pocket; that stretch reads GDVGSGKT. A DEAH box motif is present at residues 385–388; sequence DEQH. Residues 451–611 form the Helicase C-terminal domain; sequence MLDRILAFVE…GFELSEKDLE (161 aa).

Belongs to the helicase family. RecG subfamily. As to quaternary structure, monomer. Interacts with SSB (sbbA), via the latter's 6 C-terminal residues. Colocalizes with DNA pol III subunit gamma/tau (dnaX).

It localises to the cytoplasm. Its subcellular location is the nucleoid. The catalysed reaction is Couples ATP hydrolysis with the unwinding of duplex DNA by translocating in the 3'-5' direction.. The enzyme catalyses ATP + H2O = ADP + phosphate + H(+). With respect to regulation, replication fork regression on Holliday junctions (HJ) is inhibited by DisA; DisA inhibits the ATPase activity of RecG. Critical role in recombination and DNA repair. Helps process Holliday junction intermediates to mature products by catalyzing branch migration. Has a DNA unwinding activity characteristic of a DNA helicase with 3'-5' polarity. Unwinds branched duplex DNA (Y-DNA), Holliday junction (HJ) DNA and partially replicated forks as well as catalyzing fork reversal/regression. Does not seem to unwind R-loops. Inhibits the diadenylate cyclase (DAC) activity of DisA in the presence but not absence of HJ DNA, possibly by relocating DisA from the junction. This is ATP-dependent DNA helicase RecG from Bacillus subtilis (strain 168).